Consider the following 422-residue polypeptide: Aspartate--tRNA(Asp/Asn) ligase (422 aa).

Residue Glu158 coordinates L-aspartate. The interval 180 to 183 (QLYK) is aspartate. Residue Arg201 coordinates L-aspartate. ATP contacts are provided by residues 201–203 (RME), 209–211 (RHL), and Glu345. The L-aspartate site is built by Ser348 and Arg352. ATP is bound at residue 393–396 (GAER).

It belongs to the class-II aminoacyl-tRNA synthetase family. Type 2 subfamily. Homodimer. Makes part of a ribonucleoprotein particle (RNP) called transamidosome that allows channelling of the aa-tRNA from non-discriminating aspartyl-tRNA synthetase active site to the GatCAB amidotransferase site. The transamidosome complex is formed by two GatCABs, one dimeric ND-AspRSs and two tRNAs(Asn) molecules.

Its subcellular location is the cytoplasm. It carries out the reaction tRNA(Asx) + L-aspartate + ATP = L-aspartyl-tRNA(Asx) + AMP + diphosphate. Aspartyl-tRNA synthetase with relaxed tRNA specificity since it is able to aspartylate not only its cognate tRNA(Asp) but also tRNA(Asn) with similar efficiencies. Reaction proceeds in two steps: L-aspartate is first activated by ATP to form Asp-AMP and then transferred to the acceptor end of tRNA(Asp/Asn). The chain is Aspartate--tRNA(Asp/Asn) ligase (aspS2) from Thermus thermophilus (strain ATCC 27634 / DSM 579 / HB8).